Consider the following 913-residue polypeptide: Protein ECT2 (913 aa).

Residue A2 is modified to N-acetylalanine. 2 BRCT domains span residues M176 to D260 and F266 to Y354. T359 is modified (phosphothreonine; by PKC/PRKCI). Phosphoserine occurs at positions 367 and 370. Position 373 is a phosphothreonine (T373). S376 carries the post-translational modification Phosphoserine. 2 consecutive short sequence motifs (nuclear localization signal) follow at residues R378–R382 and P401–P405. Disordered regions lie at residues Q389–S415 and I427–Q450. T444 carries the post-translational modification Phosphothreonine; by CDK1. A DH domain is found at A452–D641. Residue K611 forms a Glycyl lysine isopeptide (Lys-Gly) (interchain with G-Cter in SUMO2) linkage. In terms of domain architecture, PH spans R675 to T794. S716 and S842 each carry phosphoserine. T846 is subject to Phosphothreonine; by CDK1. The segment at M853–V874 is disordered. The segment covering S856 to G870 has biased composition (low complexity). Residues S861 and S865 each carry the phosphoserine modification.

Homodimer. Homooligomer. Found in the centralspindlin complex. Interacts with NR1I3. Interacts (Thr-359 phosphorylated form) with PARD6A; the interaction is observed in cancer cells. Interacts (Thr-359 phosphorylated form) with PRKCI; the interaction is observed in cancer cells. Interacts with PKP4; the interaction is observed at the midbody. Interacts with RACGAP1; the interaction is direct, occurs in a microtubule-dependent manner, occurs at anaphase and during cytokinesis, is inhibited in metaphase by phosphorylation of ECT2 on Thr-373 and is stimulated in early anaphase by dephosphorylation of ECT2 probably on Thr-373 through CDK1 activity. Interacts with PLK1; the interaction is stimulated upon its phosphorylation on Thr-444. Interacts with RHOA; the interaction results in allosteric activation of ECT2. Interacts with KIF23, PARD3, PARD6B and PRKCQ. Interacts with NEDD9/HEF1. In terms of processing, phosphorylated by PLK1 in vitro. Hyperphosphorylated during the G2 phase of the cell cycle. Phosphorylation at Thr-373 occurs during the G2/M phase, relieves its auto-inhibition status and stimulates its GEF activity. Phosphorylation at Thr-444 in G2/M phase is required for subsequent binding with PLK1 and Rho exchange activation. Dephosphorylated at the time of cytokinesis. Phosphorylation at Thr-359 is required for its transformation activity in cancer cells. In terms of tissue distribution, highest expression in testis. Also detectable in brain, kidney, liver and spleen.

Its subcellular location is the nucleus. It localises to the cytoplasm. The protein resides in the cytoskeleton. The protein localises to the spindle. It is found in the cleavage furrow. Its subcellular location is the midbody. It localises to the cell junction. The protein resides in the tight junction. With respect to regulation, autoinhibited by the C-terminal PH domain which folds back and binds to the surface of the DH domain, blocking binding of RHOA to the catalytic center of the DH domain. The 2nd BRCT domain is also involved in inhibition, probably by helping to impede RHOA binding. Allosterically activated by binding of activated GTP-bound RHOA to the PH domain which stimulates the release of PH inhibition and promotes the binding of substrate RHOA to the catalytic center. Binding of phosphorylated RACGAP1 to the N-terminal BRCT domain-containing region also releases autoinhibition. Functionally, guanine nucleotide exchange factor (GEF) that catalyzes the exchange of GDP for GTP. Promotes guanine nucleotide exchange on the Rho family members of small GTPases, like RHOA, RHOC, RAC1 and CDC42. Required for signal transduction pathways involved in the regulation of cytokinesis. Component of the centralspindlin complex that serves as a microtubule-dependent and Rho-mediated signaling required for the myosin contractile ring formation during the cell cycle cytokinesis. Regulates the translocation of RHOA from the central spindle to the equatorial region. Plays a role in the control of mitotic spindle assembly; regulates the activation of CDC42 in metaphase for the process of spindle fibers attachment to kinetochores before chromosome congression. Involved in the regulation of epithelial cell polarity; participates in the formation of epithelial tight junctions in a polarity complex PARD3-PARD6-protein kinase PRKCQ-dependent manner. Plays a role in the regulation of neurite outgrowth. Inhibits phenobarbital (PB)-induced NR1I3 nuclear translocation. Stimulates the activity of RAC1 through its association with the oncogenic PARD6A-PRKCI complex in cancer cells, thereby acting to coordinately drive tumor cell proliferation and invasion. Also stimulates genotoxic stress-induced RHOB activity in breast cancer cells leading to their cell death. The polypeptide is Protein ECT2 (Ect2) (Mus musculus (Mouse)).